Consider the following 253-residue polypeptide: MSTQGLVQLISNAQCHLRTSTNYNDVHTQFNAVLNYKNKGTNTIDGSEAWCSSIVDTNQYIVAGCEVPRTFMCVALQGRGDHDQWVTSYKIRYSLDNVTWSEYRNGAAITGVTDRNTVVNHFFDTPIRARSIAIHPLTWNNHISLRCEFYTQPVQSSVTQVGADIYTGDNCALNTGSGKREVVVPVKFQFEFATLPKVALNFDQIDCTDATNQTRIGVQPRNITTKGFDCVFYTWNANKVYSLRADYIATALE.

Ser-2 is subject to N-acetylserine. An F5/8 type C domain is found at 2 to 152 (STQGLVQLIS…ISLRCEFYTQ (151 aa)). Positions 79-81 (RGD) match the Cell attachment site motif.

Tetramer of four different chains (A to D). Stalk cells.

It localises to the cytoplasm. In terms of biological role, galactose- and N-acetylgalactosamine-binding lectin. May play a role in cell-substratum adhesion rather than in cell-cell adhesion. May be necessary for the maintenance of normal elongate morphology during aggregation. The chain is Discoidin-1 subunit B/C (dscC-1) from Dictyostelium discoideum (Social amoeba).